The following is a 284-amino-acid chain: MPSLRDLRRRIKSIKSTQQITKAMKAVSAAKMRKAQEAVLSARPYSKRLKSVLGRVAVASGGVSHPLLAVREPKKVAYIVITADRGLCGGFNSNVIRRATQEMREQSAELSLITVGRKSRDFFRRRGYNIAQQYVGLGEEIKYGTAKEIASFVIEKYSAGEYDVVYLVYSQFVNILVQKPVVVKLLPAEPPEEEGEARKVEYIFEPSAAAVLTELLPKYIENAIYQGLLESKAGEHSARMTAMDNATKNASDMIDRLTLSMNRARQAQITKEISEIVGGAAALE.

The protein belongs to the ATPase gamma chain family. In terms of assembly, F-type ATPases have 2 components, CF(1) - the catalytic core - and CF(0) - the membrane proton channel. CF(1) has five subunits: alpha(3), beta(3), gamma(1), delta(1), epsilon(1). CF(0) has three main subunits: a, b and c.

It localises to the cell membrane. Produces ATP from ADP in the presence of a proton gradient across the membrane. The gamma chain is believed to be important in regulating ATPase activity and the flow of protons through the CF(0) complex. The polypeptide is ATP synthase gamma chain (Pelotomaculum thermopropionicum (strain DSM 13744 / JCM 10971 / SI)).